A 102-amino-acid chain; its full sequence is MSEEGKITRSIHVIPLKRVYWGRRTNRADRAVRLIRKYVRRHFKEAEKIIIDPAVNEYVWSRSREKPPRRVIVEIRFDKEEKTAKVLLIRSSKAKIMSANSK.

It belongs to the eukaryotic ribosomal protein eL31 family.

This chain is Large ribosomal subunit protein eL31, found in Staphylothermus marinus (strain ATCC 43588 / DSM 3639 / JCM 9404 / F1).